A 907-amino-acid polypeptide reads, in one-letter code: Protein translocase subunit SecA (907 aa).

ATP-binding positions include Gln-87, 105 to 109 (GEGKT), and Asp-512. Positions 862–885 (AENQLDDGHSSDQNHSPMVRDERK) are disordered. Basic and acidic residues predominate over residues 867-885 (DDGHSSDQNHSPMVRDERK). Zn(2+) is bound by residues Cys-892, Cys-894, Cys-903, and His-904.

The protein belongs to the SecA family. In terms of assembly, monomer and homodimer. Part of the essential Sec protein translocation apparatus which comprises SecA, SecYEG and auxiliary proteins SecDF-YajC and YidC. Requires Zn(2+) as cofactor.

It is found in the cell inner membrane. Its subcellular location is the cytoplasm. It catalyses the reaction ATP + H2O + cellular proteinSide 1 = ADP + phosphate + cellular proteinSide 2.. Functionally, part of the Sec protein translocase complex. Interacts with the SecYEG preprotein conducting channel. Has a central role in coupling the hydrolysis of ATP to the transfer of proteins into and across the cell membrane, serving both as a receptor for the preprotein-SecB complex and as an ATP-driven molecular motor driving the stepwise translocation of polypeptide chains across the membrane. The sequence is that of Protein translocase subunit SecA from Aliivibrio salmonicida (strain LFI1238) (Vibrio salmonicida (strain LFI1238)).